Consider the following 473-residue polypeptide: 3-isopropylmalate dehydratase large subunit (473 aa).

Residues cysteine 354, cysteine 414, and cysteine 417 each contribute to the [4Fe-4S] cluster site.

The protein belongs to the aconitase/IPM isomerase family. LeuC type 1 subfamily. As to quaternary structure, heterodimer of LeuC and LeuD. [4Fe-4S] cluster serves as cofactor.

The enzyme catalyses (2R,3S)-3-isopropylmalate = (2S)-2-isopropylmalate. It participates in amino-acid biosynthesis; L-leucine biosynthesis; L-leucine from 3-methyl-2-oxobutanoate: step 2/4. In terms of biological role, catalyzes the isomerization between 2-isopropylmalate and 3-isopropylmalate, via the formation of 2-isopropylmaleate. This Mycobacterium marinum (strain ATCC BAA-535 / M) protein is 3-isopropylmalate dehydratase large subunit.